Consider the following 355-residue polypeptide: Guanine nucleotide-binding protein G(i) subunit alpha-2 (355 aa).

Gly2 carries N-myristoyl glycine lipidation. A lipid anchor (S-palmitoyl cysteine) is attached at Cys3. The G-alpha domain maps to 32 to 355 (REVKLLLLGA…KNNLKDCGLF (324 aa)). The segment at 35–48 (KLLLLGAGESGKST) is G1 motif. Residues 40-47 (GAGESGKS), 176-182 (LRTRVKT), 201-205 (DVGGQ), 270-273 (NKKD), and Ala327 each bind GTP. Residue Ser47 participates in Mg(2+) binding. A G2 motif region spans residues 174–182 (DVLRTRVKT). Arg179 is modified (ADP-ribosylarginine; by cholera toxin). Thr182 contacts Mg(2+). Positions 197–206 (FKMFDVGGQR) are G3 motif. Deamidated glutamine; by Photorhabdus PAU_02230 is present on Gln205. A G4 motif region spans residues 266-273 (ILFLNKKD). Positions 325-330 (TCATDT) are G5 motif. Cys352 bears the ADP-ribosylcysteine; by pertussis toxin mark.

It belongs to the G-alpha family. G(i/o/t/z) subfamily. As to quaternary structure, g proteins are composed of 3 units; alpha, beta and gamma. The alpha chain contains the guanine nucleotide binding site. In this context, interacts with GNB2. Interacts with GPSM1. Interacts with RGS12 and RGS14. Interacts with UNC5B. Interacts (inactive GDP-bound form) with NUCB1 (via GBA motif); the interaction leads to activation of GNAI3. Interacts (inactive GDP-bound form) with CCDC88C/DAPLE (via GBA motif). Interacts (inactive GDP-bound form) with CCDC8A/GIV (via GBA motif). Interacts with CXCR1 and CXCR2. Post-translationally, (Microbial infection) Deamidated at Gln-205 by Photorhabdus asymbiotica toxin PAU_02230, blocking GTP hydrolysis of heterotrimeric GNAQ or GNA11 and G-alphai (GNAI1, GNAI2 or GNAI3) proteins, thereby activating RhoA.

It localises to the cytoplasm. It is found in the cytoskeleton. Its subcellular location is the microtubule organizing center. The protein resides in the centrosome. The protein localises to the cell membrane. It localises to the membrane. Functionally, guanine nucleotide-binding proteins (G proteins) are involved as modulators or transducers in various transmembrane signaling systems. The G(i) proteins are involved in hormonal regulation of adenylate cyclase: they inhibit the cyclase in response to beta-adrenergic stimuli. May play a role in cell division. In terms of biological role, regulates the cell surface density of dopamine receptors DRD2 by sequestrating them as an intracellular pool. In Homo sapiens (Human), this protein is Guanine nucleotide-binding protein G(i) subunit alpha-2 (GNAI2).